Reading from the N-terminus, the 294-residue chain is tRNA dimethylallyltransferase (294 aa).

10 to 17 (GPTAVGKT) is an ATP binding site. Substrate is bound at residue 12–17 (TAVGKT). Residues 35–38 (DSQQ) are interaction with substrate tRNA.

This sequence belongs to the IPP transferase family. As to quaternary structure, monomer. It depends on Mg(2+) as a cofactor.

It carries out the reaction adenosine(37) in tRNA + dimethylallyl diphosphate = N(6)-dimethylallyladenosine(37) in tRNA + diphosphate. Functionally, catalyzes the transfer of a dimethylallyl group onto the adenine at position 37 in tRNAs that read codons beginning with uridine, leading to the formation of N6-(dimethylallyl)adenosine (i(6)A). The chain is tRNA dimethylallyltransferase from Streptococcus mutans serotype c (strain ATCC 700610 / UA159).